We begin with the raw amino-acid sequence, 505 residues long: RNA-splicing ligase RtcB homolog (505 aa).

Residues Asp-119, Cys-122, His-227, and His-259 each contribute to the Mn(2+) site. 226–230 (NHYAE) is a binding site for GMP. At Ser-300 the chain carries Phosphoserine. His-353 serves as a coordination point for Mn(2+). GMP is bound by residues 353–354 (HN), 402–405 (GGTM), Ser-409, and 428–431 (HGAG). Catalysis depends on His-428, which acts as the GMP-histidine intermediate. Lys-496 is covalently cross-linked (Glycyl lysine isopeptide (Lys-Gly) (interchain with G-Cter in SUMO2)). Residue Lys-504 participates in GMP binding.

This sequence belongs to the RtcB family. In terms of assembly, catalytic component of the tRNA-splicing ligase complex. It depends on Mn(2+) as a cofactor.

It localises to the nucleus. It is found in the cytoplasm. The enzyme catalyses a 3'-end 3'-phospho-ribonucleotide-RNA + a 5'-end dephospho-ribonucleoside-RNA + GTP = a ribonucleotidyl-ribonucleotide-RNA + GMP + diphosphate. The catalysed reaction is a 3'-end 2',3'-cyclophospho-ribonucleotide-RNA + a 5'-end dephospho-ribonucleoside-RNA + GTP + H2O = a ribonucleotidyl-ribonucleotide-RNA + GMP + diphosphate + H(+). Functionally, catalytic subunit of the tRNA-splicing ligase complex that acts by directly joining spliced tRNA halves to mature-sized tRNAs by incorporating the precursor-derived splice junction phosphate into the mature tRNA as a canonical 3',5'-phosphodiester. May act as an RNA ligase with broad substrate specificity, and may function toward other RNAs. This chain is RNA-splicing ligase RtcB homolog, found in Rattus norvegicus (Rat).